The primary structure comprises 379 residues: Eukaryotic translation initiation factor 3 subunit H (379 aa).

Residues 17–170 (VQIDSLVVMK…IRAYRLSTKA (154 aa)) enclose the MPN domain. The segment covering 280–291 (RQAENEQREARG) has biased composition (basic and acidic residues). Residues 280–300 (RQAENEQREARGEPPLSFDDI) form a disordered region.

Belongs to the eIF-3 subunit H family. In terms of assembly, component of the eukaryotic translation initiation factor 3 (eIF-3) complex.

It is found in the cytoplasm. Its function is as follows. Component of the eukaryotic translation initiation factor 3 (eIF-3) complex, which is involved in protein synthesis of a specialized repertoire of mRNAs and, together with other initiation factors, stimulates binding of mRNA and methionyl-tRNAi to the 40S ribosome. The eIF-3 complex specifically targets and initiates translation of a subset of mRNAs involved in cell proliferation. The polypeptide is Eukaryotic translation initiation factor 3 subunit H (Brugia malayi (Filarial nematode worm)).